A 471-amino-acid polypeptide reads, in one-letter code: Adenosylhomocysteinase (471 aa).

Threonine 60, aspartate 135, and glutamate 196 together coordinate substrate. An NAD(+)-binding site is contributed by 197 to 199 (TTT). Residues lysine 226 and aspartate 230 each contribute to the substrate site. NAD(+)-binding positions include asparagine 231, 260 to 265 (GYGDVG), glutamate 283, asparagine 318, 339 to 341 (IGH), and asparagine 387.

It belongs to the adenosylhomocysteinase family. The cofactor is NAD(+).

Its subcellular location is the cytoplasm. It carries out the reaction S-adenosyl-L-homocysteine + H2O = L-homocysteine + adenosine. The protein operates within amino-acid biosynthesis; L-homocysteine biosynthesis; L-homocysteine from S-adenosyl-L-homocysteine: step 1/1. Its function is as follows. May play a key role in the regulation of the intracellular concentration of adenosylhomocysteine. This is Adenosylhomocysteinase from Chlorobium phaeobacteroides (strain DSM 266 / SMG 266 / 2430).